The chain runs to 143 residues: MKYWKYLSQLTIRRPLTYNNALLYRNRFPSILTWKRSATTQPDDTIFKDPVMDEQVQKLEEKMSSLVVNDPELAQKVGRLRQFFEKYGLEAGSKPSPLTILKITRDPEFKQLAETITEIFKKSGIQNDPAFLELVRRNLKKEK.

Residues 1-38 constitute a mitochondrion transit peptide; sequence MKYWKYLSQLTIRRPLTYNNALLYRNRFPSILTWKRSA.

Its subcellular location is the mitochondrion. This is an uncharacterized protein from Schizosaccharomyces pombe (strain 972 / ATCC 24843) (Fission yeast).